The primary structure comprises 307 residues: Ornithine carbamoyltransferase (307 aa).

Residues 50-53 (STRT), glutamine 77, arginine 101, and 128-131 (HPCQ) each bind carbamoyl phosphate. Residues asparagine 160, aspartate 224, and 228–229 (SM) contribute to the L-ornithine site. Carbamoyl phosphate contacts are provided by residues 264-265 (CL) and arginine 292.

This sequence belongs to the aspartate/ornithine carbamoyltransferase superfamily. OTCase family.

Its subcellular location is the cytoplasm. It catalyses the reaction carbamoyl phosphate + L-ornithine = L-citrulline + phosphate + H(+). It participates in amino-acid biosynthesis; L-arginine biosynthesis; L-arginine from L-ornithine and carbamoyl phosphate: step 1/3. With respect to regulation, inhibited by arginine, norvaline. Its function is as follows. Reversibly catalyzes the transfer of the carbamoyl group from carbamoyl phosphate (CP) to the N(epsilon) atom of ornithine (ORN) to produce L-citrulline, which is a substrate for argininosuccinate synthetase, the enzyme involved in the final step in arginine biosynthesis. This is Ornithine carbamoyltransferase from Mycolicibacterium smegmatis (strain ATCC 700084 / mc(2)155) (Mycobacterium smegmatis).